The following is a 279-amino-acid chain: Pantothenate synthetase (279 aa).

26–33 (MGNLHEGH) serves as a coordination point for ATP. His-33 serves as the catalytic Proton donor. Gln-57 is a binding site for (R)-pantoate. Gln-57 serves as a coordination point for beta-alanine. 144-147 (GKKD) contacts ATP. Gln-150 contributes to the (R)-pantoate binding site. ATP contacts are provided by residues Val-173 and 181-184 (LSSR).

This sequence belongs to the pantothenate synthetase family. In terms of assembly, homodimer.

It localises to the cytoplasm. The catalysed reaction is (R)-pantoate + beta-alanine + ATP = (R)-pantothenate + AMP + diphosphate + H(+). It functions in the pathway cofactor biosynthesis; (R)-pantothenate biosynthesis; (R)-pantothenate from (R)-pantoate and beta-alanine: step 1/1. Functionally, catalyzes the condensation of pantoate with beta-alanine in an ATP-dependent reaction via a pantoyl-adenylate intermediate. The sequence is that of Pantothenate synthetase from Burkholderia vietnamiensis (strain G4 / LMG 22486) (Burkholderia cepacia (strain R1808)).